The following is a 414-amino-acid chain: MSLEMFDKEIFDLTNKELERQCEGLEMIASENFTLPEVMEVMGSILTNKYAEGYPGKRYYGGCEFVDEIETLAIERCKKLFNCKFANVQPNSGSQANQGVYAALINPGDKILGMDLTHGGHLTHGAKVSSSGKMYESCFYGVELDGRIDYEKVREIAKKEKPKLIVCGASAYARVIDFAKFREIADEVGAYLFADIAHIAGLVVAGEHPSPFPHAHVVSSTTHKTLRGPRGGIIMTNDEQLAKKINSAIFPGIQGGPLMHVIAAKAVGFKFNLSDEWKVYAKQVRTNAQVLTNVLMDRKFKLVSDGTDNHLVLMSFLDREFSGKDADLALGNAGITANKNTVPGETRSPFITSGLRLGTPALTARGFKEKEMEIVSNYIADILDDINNEKLQENIKQELKKLASNFIIYERAMF.

Residues L116 and 120–122 (GHL) contribute to the (6S)-5,6,7,8-tetrahydrofolate site. An N6-(pyridoxal phosphate)lysine modification is found at K224. 348–350 (SPF) serves as a coordination point for (6S)-5,6,7,8-tetrahydrofolate.

The protein belongs to the SHMT family. As to quaternary structure, homodimer. It depends on pyridoxal 5'-phosphate as a cofactor.

It localises to the cytoplasm. It carries out the reaction (6R)-5,10-methylene-5,6,7,8-tetrahydrofolate + glycine + H2O = (6S)-5,6,7,8-tetrahydrofolate + L-serine. It functions in the pathway one-carbon metabolism; tetrahydrofolate interconversion. It participates in amino-acid biosynthesis; glycine biosynthesis; glycine from L-serine: step 1/1. Its function is as follows. Catalyzes the reversible interconversion of serine and glycine with tetrahydrofolate (THF) serving as the one-carbon carrier. This reaction serves as the major source of one-carbon groups required for the biosynthesis of purines, thymidylate, methionine, and other important biomolecules. Also exhibits THF-independent aldolase activity toward beta-hydroxyamino acids, producing glycine and aldehydes, via a retro-aldol mechanism. In Campylobacter jejuni subsp. doylei (strain ATCC BAA-1458 / RM4099 / 269.97), this protein is Serine hydroxymethyltransferase.